A 110-amino-acid polypeptide reads, in one-letter code: Quaternary ammonium compound-resistance protein QacF (110 aa).

4 helical membrane-spanning segments follow: residues 1–21 (MKNWIFLAVSIFGEVIATSAL), 31–51 (VPSVVVVAGYGLAFYFLSLAL), 58–78 (IAYAVWAGLGIVLVAAIAWIF), and 85–105 (FWAFIGMGLIVSGVAVLNLLS).

Belongs to the drug/metabolite transporter (DMT) superfamily. Small multidrug resistance (SMR) (TC 2.A.7.1) family.

The protein resides in the cell membrane. Functionally, multidrug exporter. Is implicated for the resistance to bacteriocidal quaternary ammonium compounds. The sequence is that of Quaternary ammonium compound-resistance protein QacF (qacF) from Klebsiella aerogenes (Enterobacter aerogenes).